A 467-amino-acid polypeptide reads, in one-letter code: Uronate isomerase (467 aa).

It belongs to the metallo-dependent hydrolases superfamily. Uronate isomerase family.

The enzyme catalyses D-glucuronate = D-fructuronate. It carries out the reaction aldehydo-D-galacturonate = keto-D-tagaturonate. It functions in the pathway carbohydrate metabolism; pentose and glucuronate interconversion. This chain is Uronate isomerase, found in Staphylococcus haemolyticus (strain JCSC1435).